We begin with the raw amino-acid sequence, 523 residues long: 2-isopropylmalate synthase (523 aa).

A Pyruvate carboxyltransferase domain is found at 5–267 (VIIFDTTLRD…HTRINHQEIW (263 aa)). 4 residues coordinate Mn(2+): D14, H202, H204, and N238. The segment at 392–523 (RLDYFSVQSG…QNKENNKETV (132 aa)) is regulatory domain.

It belongs to the alpha-IPM synthase/homocitrate synthase family. LeuA type 1 subfamily. Homodimer. Mn(2+) serves as cofactor.

The protein localises to the cytoplasm. The enzyme catalyses 3-methyl-2-oxobutanoate + acetyl-CoA + H2O = (2S)-2-isopropylmalate + CoA + H(+). It functions in the pathway amino-acid biosynthesis; L-leucine biosynthesis; L-leucine from 3-methyl-2-oxobutanoate: step 1/4. Functionally, catalyzes the condensation of the acetyl group of acetyl-CoA with 3-methyl-2-oxobutanoate (2-ketoisovalerate) to form 3-carboxy-3-hydroxy-4-methylpentanoate (2-isopropylmalate). This is 2-isopropylmalate synthase from Citrobacter koseri (strain ATCC BAA-895 / CDC 4225-83 / SGSC4696).